Here is a 128-residue protein sequence, read N- to C-terminus: Phosphoribosyl-AMP cyclohydrolase (128 aa).

Residue aspartate 77 coordinates Mg(2+). Cysteine 78 lines the Zn(2+) pocket. Residues aspartate 79 and aspartate 81 each contribute to the Mg(2+) site. Cysteine 94 and cysteine 101 together coordinate Zn(2+).

The protein belongs to the PRA-CH family. As to quaternary structure, homodimer. Mg(2+) serves as cofactor. The cofactor is Zn(2+).

The protein localises to the cytoplasm. The catalysed reaction is 1-(5-phospho-beta-D-ribosyl)-5'-AMP + H2O = 1-(5-phospho-beta-D-ribosyl)-5-[(5-phospho-beta-D-ribosylamino)methylideneamino]imidazole-4-carboxamide. The protein operates within amino-acid biosynthesis; L-histidine biosynthesis; L-histidine from 5-phospho-alpha-D-ribose 1-diphosphate: step 3/9. Catalyzes the hydrolysis of the adenine ring of phosphoribosyl-AMP. The protein is Phosphoribosyl-AMP cyclohydrolase of Granulibacter bethesdensis (strain ATCC BAA-1260 / CGDNIH1).